The sequence spans 77 residues: Translation initiation factor IF-1, chloroplastic (77 aa).

Residues 1–71 (MKEQKWTHEG…TRGRIIYRLR (71 aa)) enclose the S1-like domain.

The protein belongs to the IF-1 family. In terms of assembly, component of the 30S ribosomal translation pre-initiation complex which assembles on the 30S ribosome in the order IF-2 and IF-3, IF-1 and N-formylmethionyl-tRNA(fMet); mRNA recruitment can occur at any time during PIC assembly.

It localises to the plastid. The protein localises to the chloroplast. One of the essential components for the initiation of protein synthesis. Stabilizes the binding of IF-2 and IF-3 on the 30S subunit to which N-formylmethionyl-tRNA(fMet) subsequently binds. Helps modulate mRNA selection, yielding the 30S pre-initiation complex (PIC). Upon addition of the 50S ribosomal subunit IF-1, IF-2 and IF-3 are released leaving the mature 70S translation initiation complex. The polypeptide is Translation initiation factor IF-1, chloroplastic (Coffea arabica (Arabian coffee)).